Consider the following 402-residue polypeptide: 2,3-bisphosphoglycerate-independent phosphoglycerate mutase (402 aa).

Residues 155-174 (SMVSDSDPHRENERPMEVRP) are disordered. A compositionally biased stretch (basic and acidic residues) spans 160-174 (SDPHRENERPMEVRP).

Belongs to the BPG-independent phosphoglycerate mutase family. A-PGAM subfamily.

The catalysed reaction is (2R)-2-phosphoglycerate = (2R)-3-phosphoglycerate. Its pathway is carbohydrate degradation; glycolysis; pyruvate from D-glyceraldehyde 3-phosphate: step 3/5. Catalyzes the interconversion of 2-phosphoglycerate and 3-phosphoglycerate. This Picrophilus torridus (strain ATCC 700027 / DSM 9790 / JCM 10055 / NBRC 100828 / KAW 2/3) protein is 2,3-bisphosphoglycerate-independent phosphoglycerate mutase.